The primary structure comprises 963 residues: Spliceosome associated factor 3, U4/U6 recycling protein (963 aa).

Positions 1–11 (MATAAATSASE) are enriched in low complexity. Disordered regions lie at residues 1-36 (MATAAATSASEPEAESKAGPKADGEEDEVKAARTRR) and 49-86 (KTMGPGWDQQEEGVSESDGDEYAMASSAESSPGEYEWE). Ala-2 is subject to N-acetylalanine. Residues 2–351 (ATAAATSASE…LVPDLWIRYS (350 aa)) are mediates interaction with PRPF3. 2 positions are modified to phosphoserine: Ser-10 and Ser-16. The span at 14–23 (AESKAGPKAD) shows a compositional bias: basic and acidic residues. Positions 21 to 46 (KADGEEDEVKAARTRRKVLSRAVAAA) form a coiled coil. A compositionally biased stretch (acidic residues) spans 57 to 69 (QQEEGVSESDGDE). The stretch at 82–110 (EYEWEYDEEEEKNQLEIERLEEQLSINVY) forms a coiled coil. HAT repeat units lie at residues 126–158 (GELTKVRMARQKMSEIFPLTEELWLEWLHDEIS), 164–195 (LDREHVYDLFEKAVKDYICPNIWLEYGQYSVG), 201–237 (GGLEKVRSVFERALSSVGLHMSKGLALWEAYREFESA), 242–275 (ARLEKVHSLFRRQLAIPLYDMEATFAEYEEWSED), 324–356 (GDPARIQLIFERALVENCLVPDLWIRYSQYLDR), 359–391 (KVKDLVLSVHNRAIRNCPWTVALWSRYLLAMER), 394–430 (VDHQVISVTFEKALNAGFIQATDYVEIWQAYLDYLRR), and 487–520 (NNMQKARELWDSIMTRGNAKYANMWLEYYNLERA). A Phosphoserine modification is found at Ser-215. The tract at residues 487–520 (NNMQKARELWDSIMTRGNAKYANMWLEYYNLERA) is required for interaction with USP4. The necessary and sufficient for U6 snRNA binding stretch occupies residues 537–953 (CTSDYPEHVC…AATEAPKMSN (417 aa)). Residues 559–619 (LEDWDIAVQK…ALKKKKKIRG (61 aa)) adopt a coiled-coil conformation. The segment at 600-670 (QRKRARAEKK…EVAPGPAGKC (71 aa)) is required for nuclear localization. The short motif at 601 to 608 (RKRARAEK) is the Nuclear localization signal element. The span at 608 to 619 (KKALKKKKKIRG) shows a compositional bias: basic and acidic residues. The interval 608–712 (KKALKKKKKI…SITVFVSNLP (105 aa)) is disordered. The span at 620–635 (PEKRGADEDDEKEWGD) shows a compositional bias: basic residues. The span at 644-657 (RRRVENSIPAAGET) shows a compositional bias: acidic residues. Ser-650 bears the Phosphoserine mark. A Phosphothreonine modification is found at Thr-657. The span at 695–712 (VLHDSSKDSITVFVSNLP) shows a compositional bias: basic and acidic residues. An RRM 1 domain is found at 704 to 782 (ITVFVSNLPY…RPMFVSPCVD (79 aa)). A phosphoserine mark is found at Ser-769, Ser-795, and Ser-852. Residues 801 to 878 (HKLFISGLPF…NVIKVAISNP (78 aa)) form the RRM 2 domain. The span at 900 to 909 (PQTYGARGKG) shows a compositional bias: basic and acidic residues. Arg-906 is subject to Omega-N-methylarginine.

In terms of assembly, component of the 7SK snRNP complex at least composed of P-TEFb (composed of CDK9 and CCNT1/cyclin-T1), HEXIM1, HEXIM2, BCDIN3, SART3 proteins and 7SK and U6 snRNAs. Interacts with AGO1 and AGO2. Interacts with PRPF3 and USP4; the interaction with PRPF3 is direct and recruits USP4 to its substrate PRPF3. Interacts with USP15; the interaction is direct.

It is found in the nucleus. It localises to the nucleoplasm. The protein resides in the cajal body. The protein localises to the nucleus speckle. Its subcellular location is the cytoplasm. U6 snRNP-binding protein that functions as a recycling factor of the splicing machinery. Promotes the initial reassembly of U4 and U6 snRNPs following their ejection from the spliceosome during its maturation. Also binds U6atac snRNPs and may function as a recycling factor for U4atac/U6atac spliceosomal snRNP, an initial step in the assembly of U12-type spliceosomal complex. The U12-type spliceosomal complex plays a role in the splicing of introns with non-canonical splice sites. May also function as a substrate-targeting factor for deubiquitinases like USP4 and USP15. Recruits USP4 to ubiquitinated PRPF3 within the U4/U5/U6 tri-snRNP complex, promoting PRPF3 deubiquitination and thereby regulating the spliceosome U4/U5/U6 tri-snRNP spliceosomal complex disassembly. May also recruit the deubiquitinase USP15 to histone H2B and mediate histone deubiquitination, thereby regulating gene expression and/or DNA repair. May play a role in hematopoiesis probably through transcription regulation of specific genes including MYC. The polypeptide is Spliceosome associated factor 3, U4/U6 recycling protein (Pongo abelii (Sumatran orangutan)).